An 85-amino-acid chain; its full sequence is Latartoxin-1a (85 aa).

Positions 1–19 (MKVLVFAIVCSVLLQVVLS) are cleaved as a signal peptide. Positions 20 to 25 (ADEEAR) are cleaved as a propeptide — removed in mature form. Positions 22–25 (EEAR) match the Processing quadruplet motif motif. 4 disulfide bridges follow: cysteine 27-cysteine 42, cysteine 34-cysteine 47, cysteine 41-cysteine 64, and cysteine 49-cysteine 62.

This sequence belongs to the neurotoxin 19 (CSTX) family. Contains 4 disulfide bonds. In terms of processing, cleavage of the propeptide depends on the processing quadruplet motif (XXXR, with at least one of X being E). In terms of tissue distribution, expressed by the venom gland.

Its subcellular location is the secreted. In terms of biological role, insect toxin. Causes paralysis in larvae of C.vicina by depolarizing membranes at the neuromuscular junction. This Lachesana tarabaevi (Spider) protein is Latartoxin-1a.